A 197-amino-acid chain; its full sequence is Xanthine phosphoribosyltransferase (197 aa).

Residues Leu20 and Asn27 each contribute to the xanthine site. 128-132 (ANGQA) contributes to the 5-phospho-alpha-D-ribose 1-diphosphate binding site. Xanthine is bound at residue Lys156.

This sequence belongs to the purine/pyrimidine phosphoribosyltransferase family. Xpt subfamily. In terms of assembly, homodimer.

Its subcellular location is the cytoplasm. The enzyme catalyses XMP + diphosphate = xanthine + 5-phospho-alpha-D-ribose 1-diphosphate. Its pathway is purine metabolism; XMP biosynthesis via salvage pathway; XMP from xanthine: step 1/1. Converts the preformed base xanthine, a product of nucleic acid breakdown, to xanthosine 5'-monophosphate (XMP), so it can be reused for RNA or DNA synthesis. The chain is Xanthine phosphoribosyltransferase from Bacillus anthracis (strain A0248).